We begin with the raw amino-acid sequence, 607 residues long: MIQALLVIICLAVFPHQGSSIILESGNVNDYEVVYPQKVPALLKGGVQNPQPETKYEDTMRYEFQVNGEPVVLHLERNKGLFSEDYTETHYAPDGREITTSPPVQDHCYYHGYIQNEADSSAVISACNGLKGHFKHQGETYFIEPLELSESEAHAIYKDENVEKEDETPKICAVTQTTWESDESIEKTSQLTNTPEQDRYLQVKKYIEFYLVVDNKMYKNHTSNQELRTRVYEMVNYLNTKYRRLNFHIALIGLEIWSNQDKVDMDPGANVTLKSFAEWRAKLPPHKRNDNAQLLTGIDFNGTTVGLAYTGTLCTWGSVAVVQDYSRRTILMASTMAHELGHNMGIHHDKANCRCSHSPCIMSDTISDEPFYEFSSCSVREHQEYLLRERPQCILNKPSRKAIVSRPVCGNNFVEVGEQCDCGSLQDCQSTCCNATTCKLQPHAQCDSEECCEKCKFKGAETECRAAKDDCDLPEFCTGQSAECPTDSLQRNGHPCQNNQGYCYNGKCPTMENQCITLLGPNYTVGPAGCFKNNRKGDDVSHCRKENGAKIPCAAKDEKCGTLYCTEIKKTGCIVPVSPRDPDSRMVEPGTKCEDKKVCSKSQCVKV.

Residues 1–20 (MIQALLVIICLAVFPHQGSS) form the signal peptide. Residues 21 to 196 (IILESGNVND…KTSQLTNTPE (176 aa)) constitute a propeptide that is removed on maturation. A Peptidase M12B domain is found at 205 to 398 (KYIEFYLVVD…ERPQCILNKP (194 aa)). Glu208 serves as a coordination point for Ca(2+). N-linked (GlcNAc...) asparagine glycans are attached at residues Asn220 and Asn270. Asp290 is a Ca(2+) binding site. The N-linked (GlcNAc...) asparagine glycan is linked to Asn301. 3 cysteine pairs are disulfide-bonded: Cys314–Cys393, Cys353–Cys377, and Cys355–Cys360. The Zn(2+) site is built by His338, His342, and His348. Positions 393, 396, 411, 413, 415, 418, and 421 each coordinate Ca(2+). The Disintegrin domain maps to 406 to 492 (RPVCGNNFVE…ECPTDSLQRN (87 aa)). Intrachain disulfides connect Cys409–Cys438, Cys420–Cys433, Cys422–Cys428, Cys432–Cys455, Cys446–Cys452, Cys451–Cys477, Cys464–Cys484, Cys471–Cys503, Cys496–Cys508, Cys515–Cys565, Cys530–Cys573, Cys543–Cys553, Cys560–Cys599, and Cys593–Cys604. An N-linked (GlcNAc...) asparagine glycan is attached at Asn434. The D/ECD-tripeptide motif lies at 470–472 (DCD). Asp472, Leu473, Glu475, Asp487, and Ser488 together coordinate Ca(2+). Asn522 carries N-linked (GlcNAc...) asparagine glycosylation.

It belongs to the venom metalloproteinase (M12B) family. P-III subfamily. P-IIIa sub-subfamily. In terms of assembly, monomer. It depends on Zn(2+) as a cofactor. Expressed by the venom gland.

Its subcellular location is the secreted. In terms of biological role, snake venom zinc metalloproteinase that inhibits platelet aggregation by cleaving platelet glycoprotein Ib alpha (GP1BA) at Glu-298/Asp-299, and abolishes binding of von Willebrand factor (VWF) to GPIBA. This is Zinc metalloproteinase-disintegrin-like atrase-A from Naja atra (Chinese cobra).